A 239-amino-acid polypeptide reads, in one-letter code: Geranylgeranylglyceryl phosphate synthase (239 aa).

Mg(2+) contacts are provided by aspartate 19 and serine 48. Sn-glycerol 1-phosphate is bound by residues tyrosine 167–glycine 173, glycine 197–glycine 198, and glycine 219–threonine 220.

It belongs to the GGGP/HepGP synthase family. Group II subfamily. Requires Mg(2+) as cofactor.

The protein localises to the cytoplasm. It carries out the reaction sn-glycerol 1-phosphate + (2E,6E,10E)-geranylgeranyl diphosphate = sn-3-O-(geranylgeranyl)glycerol 1-phosphate + diphosphate. It functions in the pathway membrane lipid metabolism; glycerophospholipid metabolism. Functionally, prenyltransferase that catalyzes the transfer of the geranylgeranyl moiety of geranylgeranyl diphosphate (GGPP) to the C3 hydroxyl of sn-glycerol-1-phosphate (G1P). This reaction is the first ether-bond-formation step in the biosynthesis of archaeal membrane lipids. The chain is Geranylgeranylglyceryl phosphate synthase from Methanopyrus kandleri (strain AV19 / DSM 6324 / JCM 9639 / NBRC 100938).